We begin with the raw amino-acid sequence, 450 residues long: Phosphoglucosamine mutase 2 (450 aa).

Ser101 functions as the Phosphoserine intermediate in the catalytic mechanism. 4 residues coordinate Mg(2+): Ser101, Asp245, Asp247, and Asp249. Ser101 is subject to Phosphoserine.

This sequence belongs to the phosphohexose mutase family. It depends on Mg(2+) as a cofactor. In terms of processing, activated by phosphorylation.

It carries out the reaction alpha-D-glucosamine 1-phosphate = D-glucosamine 6-phosphate. Functionally, catalyzes the conversion of glucosamine-6-phosphate to glucosamine-1-phosphate. The protein is Phosphoglucosamine mutase 2 of Shewanella baltica (strain OS185).